The sequence spans 429 residues: Probable M18 family aminopeptidase 2 (429 aa).

Positions 82, 156, and 401 each coordinate Zn(2+).

It belongs to the peptidase M18 family. It depends on Zn(2+) as a cofactor.

This Pseudomonas syringae pv. syringae (strain B728a) protein is Probable M18 family aminopeptidase 2.